The primary structure comprises 305 residues: UDP-3-O-acyl-N-acetylglucosamine deacetylase (305 aa).

3 residues coordinate Zn(2+): His-79, His-238, and Asp-242. The active-site Proton donor is the His-265.

It belongs to the LpxC family. It depends on Zn(2+) as a cofactor.

It carries out the reaction a UDP-3-O-[(3R)-3-hydroxyacyl]-N-acetyl-alpha-D-glucosamine + H2O = a UDP-3-O-[(3R)-3-hydroxyacyl]-alpha-D-glucosamine + acetate. It functions in the pathway glycolipid biosynthesis; lipid IV(A) biosynthesis; lipid IV(A) from (3R)-3-hydroxytetradecanoyl-[acyl-carrier-protein] and UDP-N-acetyl-alpha-D-glucosamine: step 2/6. Catalyzes the hydrolysis of UDP-3-O-myristoyl-N-acetylglucosamine to form UDP-3-O-myristoylglucosamine and acetate, the committed step in lipid A biosynthesis. This Haemophilus influenzae (strain PittEE) protein is UDP-3-O-acyl-N-acetylglucosamine deacetylase.